Here is a 378-residue protein sequence, read N- to C-terminus: Aminotransferase apf4 (378 aa).

R88 lines the pyridoxal 5'-phosphate pocket. At K189 the chain carries N6-(pyridoxal phosphate)lysine. Position 228 (E228) interacts with pyridoxal 5'-phosphate. Residues 359 to 378 (ERGHNGQPTADPTRVIEMPE) form a disordered region.

It belongs to the class-IV pyridoxal-phosphate-dependent aminotransferase family. It depends on pyridoxal 5'-phosphate as a cofactor.

Its pathway is secondary metabolite biosynthesis. In terms of biological role, aminotransferase; part of the gene cluster that mediates the biosynthesis of the cyclic tetrapeptide apicidin F (APF). The non-ribosomal peptide synthetase apf1 incorporates four different amino acids to produce apicidin F: L-phenylalanine, D-pipecolic acid (D-pip), N-methoxy-L-tryptophan and L-2-aminooctanedioic acid. L-Phenylalanine is the only proteinogenic amino acid directly used by apf1. The 3 other apf1 substrates are non-proteinogenic and have to be modified by other enzymes of the cluster. Lysine is converted to delta-1-pyrroline-5-carboxylate (P5C) which is reduced to L-pipecolic acid (L-pip) by apf3. L-pip is epimerized to D-pip, probably by apf1 activity, prior to incorporation. L-Tryptophan is N-oxidyzed by one of the cytochrome P450 monooxygenases (apf7 or apf8), and further methylated at the hydroxy group by the O-methyltransferase apf6 to yield N-methoxy-L-tryptophan. The synthesis of the fourth apf1 substrate is more complex. The fatty acid synthase apf5 is involved in the synthesis of the octanoic acid backbone of L-2-aminooctanedioic acid by fixing one acetyl-CoA unit and three malonyl-CoA units. Then one of the cytochrome P450 monooxygenases (apf7 or apf8) may oxidize this backbone to 2-oxooctanoic acid. The aminotransferase apf4 is predicted to catalyze the exchange of the keto group with an amino group. The next step would be the oxidation of 2-aminooctanoic acid by one of the cytochrome P450 monooxygenases (apf7 or apf8). The last step is the oxidation of 2-amino-8-hydroxyoctanoic acid to 2-aminooctanedioic acid is catalyzed by the FAD-dependent monooxygenase apf9. This Gibberella fujikuroi (strain CBS 195.34 / IMI 58289 / NRRL A-6831) (Bakanae and foot rot disease fungus) protein is Aminotransferase apf4.